We begin with the raw amino-acid sequence, 122 residues long: Large ribosomal subunit protein uL22 (122 aa).

The protein belongs to the universal ribosomal protein uL22 family. As to quaternary structure, part of the 50S ribosomal subunit.

Its function is as follows. This protein binds specifically to 23S rRNA; its binding is stimulated by other ribosomal proteins, e.g. L4, L17, and L20. It is important during the early stages of 50S assembly. It makes multiple contacts with different domains of the 23S rRNA in the assembled 50S subunit and ribosome. The globular domain of the protein is located near the polypeptide exit tunnel on the outside of the subunit, while an extended beta-hairpin is found that lines the wall of the exit tunnel in the center of the 70S ribosome. The sequence is that of Large ribosomal subunit protein uL22 from Thermosynechococcus vestitus (strain NIES-2133 / IAM M-273 / BP-1).